Here is a 403-residue protein sequence, read N- to C-terminus: Imidazolonepropionase (403 aa).

The Fe(3+) site is built by His-69 and His-71. Zn(2+) contacts are provided by His-69 and His-71. 4-imidazolone-5-propanoate contacts are provided by Arg-78, Tyr-141, and His-174. Tyr-141 is an N-formimidoyl-L-glutamate binding site. His-239 is a binding site for Fe(3+). His-239 contacts Zn(2+). Gln-242 provides a ligand contact to 4-imidazolone-5-propanoate. Residue Asp-314 participates in Fe(3+) binding. Position 314 (Asp-314) interacts with Zn(2+). N-formimidoyl-L-glutamate is bound by residues Asn-316 and Gly-318. Residue Ser-319 coordinates 4-imidazolone-5-propanoate.

Belongs to the metallo-dependent hydrolases superfamily. HutI family. Zn(2+) is required as a cofactor. Requires Fe(3+) as cofactor.

It is found in the cytoplasm. The catalysed reaction is 4-imidazolone-5-propanoate + H2O = N-formimidoyl-L-glutamate. It participates in amino-acid degradation; L-histidine degradation into L-glutamate; N-formimidoyl-L-glutamate from L-histidine: step 3/3. Its function is as follows. Catalyzes the hydrolytic cleavage of the carbon-nitrogen bond in imidazolone-5-propanoate to yield N-formimidoyl-L-glutamate. It is the third step in the universal histidine degradation pathway. The sequence is that of Imidazolonepropionase from Legionella pneumophila (strain Lens).